A 325-amino-acid polypeptide reads, in one-letter code: Beta-ketoacyl-[acyl-carrier-protein] synthase III (325 aa).

Residues C114 and H252 contribute to the active site. The interval 253–257 (QANFR) is ACP-binding. N282 is a catalytic residue.

This sequence belongs to the thiolase-like superfamily. FabH family. As to quaternary structure, homodimer.

It is found in the cytoplasm. It carries out the reaction malonyl-[ACP] + acetyl-CoA + H(+) = 3-oxobutanoyl-[ACP] + CO2 + CoA. It functions in the pathway lipid metabolism; fatty acid biosynthesis. In terms of biological role, catalyzes the condensation reaction of fatty acid synthesis by the addition to an acyl acceptor of two carbons from malonyl-ACP. Catalyzes the first condensation reaction which initiates fatty acid synthesis and may therefore play a role in governing the total rate of fatty acid production. Possesses both acetoacetyl-ACP synthase and acetyl transacylase activities. Its substrate specificity determines the biosynthesis of branched-chain and/or straight-chain of fatty acids. The chain is Beta-ketoacyl-[acyl-carrier-protein] synthase III from Novosphingobium aromaticivorans (strain ATCC 700278 / DSM 12444 / CCUG 56034 / CIP 105152 / NBRC 16084 / F199).